The chain runs to 148 residues: uncharacterized protein (148 aa).

Positions methionine 1–serine 22 are cleaved as a signal peptide.

This is an uncharacterized protein from Saccharomyces cerevisiae (strain ATCC 204508 / S288c) (Baker's yeast).